Here is a 273-residue protein sequence, read N- to C-terminus: 2,3,4,5-tetrahydropyridine-2,6-dicarboxylate N-succinyltransferase (273 aa).

Residues R104 and D141 each contribute to the substrate site.

This sequence belongs to the transferase hexapeptide repeat family. Homotrimer.

Its subcellular location is the cytoplasm. The enzyme catalyses (S)-2,3,4,5-tetrahydrodipicolinate + succinyl-CoA + H2O = (S)-2-succinylamino-6-oxoheptanedioate + CoA. The protein operates within amino-acid biosynthesis; L-lysine biosynthesis via DAP pathway; LL-2,6-diaminopimelate from (S)-tetrahydrodipicolinate (succinylase route): step 1/3. The chain is 2,3,4,5-tetrahydropyridine-2,6-dicarboxylate N-succinyltransferase from Laribacter hongkongensis (strain HLHK9).